The primary structure comprises 357 residues: Protein BUR2 (357 aa).

As to quaternary structure, belongs to the BUR kinase complex.

The protein resides in the nucleus. Component of the BUR kinase complex involved in transcription regulation. This complex phosphorylates the UBC2/RAD6 ubiquitin-conjugating enzyme (E2), leading to monoubiquitination of histone H2B and the silencing of telomeric-associated genes. Also required for histone H3 methylation. Necessary for the recovery from pheromone-induced growth arrest in the cell cycle G1 phase. The kinase activity of the complex requires the presence of BUR2. Overexpression of BUR2 interferes with mitotic chromosome segregation. In Candida glabrata (strain ATCC 2001 / BCRC 20586 / JCM 3761 / NBRC 0622 / NRRL Y-65 / CBS 138) (Yeast), this protein is Protein BUR2 (BUR2).